A 186-amino-acid chain; its full sequence is Ribosome-recycling factor (186 aa).

This sequence belongs to the RRF family.

Its subcellular location is the cytoplasm. Responsible for the release of ribosomes from messenger RNA at the termination of protein biosynthesis. May increase the efficiency of translation by recycling ribosomes from one round of translation to another. In Maricaulis maris (strain MCS10) (Caulobacter maris), this protein is Ribosome-recycling factor.